Consider the following 384-residue polypeptide: Anhydro-N-acetylmuramic acid kinase (384 aa).

Position 9–16 (9–16) interacts with ATP; that stretch reads GTSVDGID.

This sequence belongs to the anhydro-N-acetylmuramic acid kinase family.

It carries out the reaction 1,6-anhydro-N-acetyl-beta-muramate + ATP + H2O = N-acetyl-D-muramate 6-phosphate + ADP + H(+). The protein operates within amino-sugar metabolism; 1,6-anhydro-N-acetylmuramate degradation. It functions in the pathway cell wall biogenesis; peptidoglycan recycling. Catalyzes the specific phosphorylation of 1,6-anhydro-N-acetylmuramic acid (anhMurNAc) with the simultaneous cleavage of the 1,6-anhydro ring, generating MurNAc-6-P. Is required for the utilization of anhMurNAc either imported from the medium or derived from its own cell wall murein, and thus plays a role in cell wall recycling. This Rippkaea orientalis (strain PCC 8801 / RF-1) (Cyanothece sp. (strain PCC 8801)) protein is Anhydro-N-acetylmuramic acid kinase.